Consider the following 367-residue polypeptide: sn-glycerol-3-phosphate import ATP-binding protein UgpC (367 aa).

The 232-residue stretch at L4–I235 folds into the ABC transporter domain. G37–S44 contributes to the ATP binding site.

It belongs to the ABC transporter superfamily. sn-glycerol-3-phosphate importer (TC 3.A.1.1.3) family. As to quaternary structure, the complex is composed of two ATP-binding proteins (UgpC), two transmembrane proteins (UgpA and UgpE) and a solute-binding protein (UgpB).

Its subcellular location is the cell inner membrane. The catalysed reaction is sn-glycerol 3-phosphate(out) + ATP + H2O = sn-glycerol 3-phosphate(in) + ADP + phosphate + H(+). Its function is as follows. Part of the ABC transporter complex UgpBAEC involved in sn-glycerol-3-phosphate (G3P) import. Responsible for energy coupling to the transport system. The protein is sn-glycerol-3-phosphate import ATP-binding protein UgpC of Cupriavidus metallidurans (strain ATCC 43123 / DSM 2839 / NBRC 102507 / CH34) (Ralstonia metallidurans).